We begin with the raw amino-acid sequence, 227 residues long: Monoamine regulon transcriptional regulator (227 aa).

Residues 155-220 (EDDLPAILTA…ELVSRTWMPA (66 aa)) form the HTH luxR-type domain. Residues 179–198 (NKLIARQLDISLSTVKTHLR) constitute a DNA-binding region (H-T-H motif).

In terms of biological role, positive regulatory protein for the induction of arylsulfatase synthesis (maoA), tyramine oxidase (tynA), maoC, maoE/F operon, and atsB/A operon which are all regulated by monoamines, and included under the common term of monoamine regulon. The protein is Monoamine regulon transcriptional regulator (moaR) of Klebsiella aerogenes (Enterobacter aerogenes).